The following is a 145-amino-acid chain: Ribosomal protein uL24-like (145 aa).

Disordered stretches follow at residues 1 to 21 and 122 to 145; these read MKFN…HFNA and KAKS…KMQE. Glycyl lysine isopeptide (Lys-Gly) (interchain with G-Cter in SUMO2) cross-links involve residues Lys-136 and Lys-142.

It belongs to the universal ribosomal protein uL24 family.

This is Ribosomal protein uL24-like (RPL26L1) from Homo sapiens (Human).